Reading from the N-terminus, the 349-residue chain is Inhibitor of nuclear factor kappa-B kinase-interacting protein (349 aa).

A compositionally biased stretch (basic residues) spans 1 to 11; the sequence is MSEVKSRKKSG. A disordered region spans residues 1–39; the sequence is MSEVKSRKKSGTKGAPAEPGKRNEGGKSPEARGGGGRGW. The segment covering 19-30 has biased composition (basic and acidic residues); sequence PGKRNEGGKSPE. The helical transmembrane segment at 45-61 threads the bilayer; it reads GVSLLSLGTCLGLAWFV. N145 is a glycosylation site (N-linked (GlcNAc...) asparagine). 2 coiled-coil regions span residues 183-216 and 304-347; these read GLVT…IGDL and IGRL…HISD. N327 carries an N-linked (GlcNAc...) asparagine glycan.

In terms of processing, N-glycosylated.

The protein localises to the endoplasmic reticulum membrane. Functionally, target of p53/TP53 with pro-apoptotic function. This chain is Inhibitor of nuclear factor kappa-B kinase-interacting protein (IKBIP), found in Bos taurus (Bovine).